A 318-amino-acid polypeptide reads, in one-letter code: Acetyl-coenzyme A carboxylase carboxyl transferase subunit alpha (318 aa).

A CoA carboxyltransferase C-terminal domain is found at 41 to 295 (HLEKKNEELT…KQRILTDLNE (255 aa)).

It belongs to the AccA family. As to quaternary structure, acetyl-CoA carboxylase is a heterohexamer composed of biotin carboxyl carrier protein (AccB), biotin carboxylase (AccC) and two subunits each of ACCase subunit alpha (AccA) and ACCase subunit beta (AccD).

The protein resides in the cytoplasm. It carries out the reaction N(6)-carboxybiotinyl-L-lysyl-[protein] + acetyl-CoA = N(6)-biotinyl-L-lysyl-[protein] + malonyl-CoA. Its pathway is lipid metabolism; malonyl-CoA biosynthesis; malonyl-CoA from acetyl-CoA: step 1/1. Its function is as follows. Component of the acetyl coenzyme A carboxylase (ACC) complex. First, biotin carboxylase catalyzes the carboxylation of biotin on its carrier protein (BCCP) and then the CO(2) group is transferred by the carboxyltransferase to acetyl-CoA to form malonyl-CoA. In Tolumonas auensis (strain DSM 9187 / NBRC 110442 / TA 4), this protein is Acetyl-coenzyme A carboxylase carboxyl transferase subunit alpha.